A 440-amino-acid polypeptide reads, in one-letter code: MSITYSAISFSGFSPKSVPFAIHSVTRRQFLNPNTFYRFGFSPSLQGSSIEFSLQLNSRVVLSKERRSLPLVVRNDRPQNEDLPKQYTRREKKPFPVPIVDLRRAARERVKNNKDKPKRPLPPPKNGMVVKSLVPLAYKVYNARIRLINNLHRLMKVVRVNACGWCNEIHVGPYGHPFKSCKGPNTSQRKGLHEWTNSVIEDVIVPLEAYHLFDRLGKRIRHDERFSIPRVPAVVELCIQGGVEIPEFPAKRRRKPIIRIGKSEFVDADETELPDPEPQPPPVPLLTELPVSEITPPSSEEETVSLAEETLQAWEEMRAGAKKLMRMYRVRVCGYCPEVHVGPTGHKAQNCGAFKHQQRNGQHGWQSAVLDDLIPPRYVWHVPDVNGPPMQRELRSFYGQAPAVVEICAQAGAVVPEHYRATMRLEVGIPSSVKEAEMVV.

The transit peptide at 1 to 62 directs the protein to the chloroplast; that stretch reads MSITYSAISF…SLQLNSRVVL (62 aa). A compositionally biased stretch (basic and acidic residues) spans 106-115; the sequence is ARERVKNNKD. Residues 106-126 are disordered; the sequence is ARERVKNNKDKPKRPLPPPKN. APO domains lie at 162–247 and 332–417; these read ACGW…EIPE and VCGY…VVPE.

This sequence belongs to the APO family.

The protein localises to the plastid. Its subcellular location is the chloroplast. Its function is as follows. May be involved in the stable assembly of several 4Fe-4S cluster-containing complexes of chloroplasts. This chain is APO protein 2, chloroplastic (APO2), found in Arabidopsis thaliana (Mouse-ear cress).